We begin with the raw amino-acid sequence, 712 residues long: Protein phosphatase 1 regulatory subunit 37 (712 aa).

Residues 1 to 12 (MEIPPQEAPPGP) show a composition bias toward pro residues. The segment at 1 to 47 (MEIPPQEAPPGPGADADADAEAETEEASAEAESPTGTSPPADGRLKA) is disordered. Residues 16–29 (ADADAEAETEEASA) show a composition bias toward acidic residues. Phosphoserine is present on residues Ser56 and Ser62. 5 LRR repeats span residues 226 to 246 (SLAVLHLENASLSGRPLMLLA), 254 to 275 (NLRELYLADNKLNGLQDSAQLG), 283 to 303 (SLQILDLRNNHVLDSGLAYIC), 312 to 332 (GLVTLVLWNNQLTHTGMAFLG), and 340 to 360 (SLETLNLGHNPIGNEGVRNLK). The segment at 492-680 (ESGELPAVGS…PPGLEAKGGS (189 aa)) is disordered. A compositionally biased stretch (acidic residues) spans 514 to 531 (SDSDSDSDREEQEEEEED). The residue at position 583 (Ser583) is a Phosphoserine. The segment covering 605–626 (PPVPPTFVSSPPPSPPSPPASP) has biased composition (pro residues). Residues 639-651 (SEAQPQLEPSQAG) show a composition bias toward polar residues.

It belongs to the PPP1R37 family. Interacts with PPP1CA.

Functionally, inhibits phosphatase activity of protein phosphatase 1 (PP1) complexes. The polypeptide is Protein phosphatase 1 regulatory subunit 37 (Ppp1r37) (Mus musculus (Mouse)).